We begin with the raw amino-acid sequence, 441 residues long: UPF0761 membrane protein Clim_1521 (441 aa).

The next 6 helical transmembrane spans lie at 54-74, 122-142, 161-181, 203-223, 233-253, and 266-286; these read IFLS…PFLA, TVPL…ISTI, AFTL…SSLG, LISF…YMLV, AFSG…WFVF, and GAIS…LVVL.

Belongs to the UPF0761 family.

It is found in the cell inner membrane. The protein is UPF0761 membrane protein Clim_1521 of Chlorobium limicola (strain DSM 245 / NBRC 103803 / 6330).